We begin with the raw amino-acid sequence, 504 residues long: ATP synthase subunit alpha (504 aa).

170–177 (GDRQTGKT) contacts ATP.

It belongs to the ATPase alpha/beta chains family. F-type ATPases have 2 components, CF(1) - the catalytic core - and CF(0) - the membrane proton channel. CF(1) has five subunits: alpha(3), beta(3), gamma(1), delta(1), epsilon(1). CF(0) has four main subunits: a, b, b' and c.

It is found in the cellular thylakoid membrane. The catalysed reaction is ATP + H2O + 4 H(+)(in) = ADP + phosphate + 5 H(+)(out). Its function is as follows. Produces ATP from ADP in the presence of a proton gradient across the membrane. The alpha chain is a regulatory subunit. This Prochlorococcus marinus (strain MIT 9211) protein is ATP synthase subunit alpha.